Reading from the N-terminus, the 811-residue chain is Probable inorganic carbon transporter subunit DabA (811 aa).

Positions 336, 338, 498, and 513 each coordinate Zn(2+).

Belongs to the inorganic carbon transporter (TC 9.A.2) DabA family. In terms of assembly, forms a complex with DabB. It depends on Zn(2+) as a cofactor.

The protein localises to the cell inner membrane. Functionally, part of an energy-coupled inorganic carbon pump. This is Probable inorganic carbon transporter subunit DabA from Rhodospirillum centenum (strain ATCC 51521 / SW).